Reading from the N-terminus, the 158-residue chain is Large ribosomal subunit protein eL24 (158 aa).

Positions 98-146 are enriched in basic and acidic residues; that stretch reads LDASHKKAEAEKAVRELKQKKANDIEKKRADRKLQGKDVKAAKKAETKK. The disordered stretch occupies residues 98–158; that stretch reads LDASHKKAEA…QPVGAKGGKK (61 aa).

Belongs to the eukaryotic ribosomal protein eL24 family.

In Tetrahymena thermophila (strain SB210), this protein is Large ribosomal subunit protein eL24 (RPL24).